The sequence spans 298 residues: ATP synthase gamma chain (298 aa).

Belongs to the ATPase gamma chain family. In terms of assembly, F-type ATPases have 2 components, CF(1) - the catalytic core - and CF(0) - the membrane proton channel. CF(1) has five subunits: alpha(3), beta(3), gamma(1), delta(1), epsilon(1). CF(0) has three main subunits: a, b and c.

The protein resides in the cell inner membrane. Produces ATP from ADP in the presence of a proton gradient across the membrane. The gamma chain is believed to be important in regulating ATPase activity and the flow of protons through the CF(0) complex. The chain is ATP synthase gamma chain from Francisella tularensis subsp. holarctica (strain FTNF002-00 / FTA).